The following is a 152-amino-acid chain: UPF0756 membrane protein Moth_1009 (152 aa).

The next 4 helical transmembrane spans lie at 5–25 (LIILAVLVVAVLGRANTVALA), 41–61 (IFPFIEKGGTFWGLVLLIAAI), 75–95 (LGHVFLSWVGLSAFILSLITT), and 117–137 (LILGAVIAAAFLGGVPVGPFI).

This sequence belongs to the UPF0756 family.

The protein localises to the cell membrane. This chain is UPF0756 membrane protein Moth_1009, found in Moorella thermoacetica (strain ATCC 39073 / JCM 9320).